Here is a 180-residue protein sequence, read N- to C-terminus: Large ribosomal subunit protein uL6 (180 aa).

The protein belongs to the universal ribosomal protein uL6 family. Part of the 50S ribosomal subunit.

This protein binds to the 23S rRNA, and is important in its secondary structure. It is located near the subunit interface in the base of the L7/L12 stalk, and near the tRNA binding site of the peptidyltransferase center. The protein is Large ribosomal subunit protein uL6 of Borreliella burgdorferi (strain ATCC 35210 / DSM 4680 / CIP 102532 / B31) (Borrelia burgdorferi).